We begin with the raw amino-acid sequence, 384 residues long: Gastrin-releasing peptide receptor (384 aa).

Over 1-39 (MDPNNCSHLNLEVDPFLSCNNTFNQTLNPPKMDNWFHPG) the chain is Extracellular. N-linked (GlcNAc...) asparagine glycans are attached at residues asparagine 5, asparagine 20, and asparagine 24. Residues 40-63 (IIYVIPAVYGLIIVIGLIGNITLI) traverse the membrane as a helical segment. Residues 64–77 (KIFCTVKSMRNVPN) are Cytoplasmic-facing. Residues 78–97 (LFISSLALGDLLLLVTCAPV) traverse the membrane as a helical segment. The Extracellular portion of the chain corresponds to 98 to 115 (DASKYLADRWLFGRIGCK). An intrachain disulfide couples cysteine 114 to cysteine 197. Residues 116–137 (LIPFIQLTSVGVSVFTLTALSA) form a helical membrane-spanning segment. The Cytoplasmic segment spans residues 138–153 (DRYKAIVRPMDIQASH). A helical membrane pass occupies residues 154–175 (ALMKICLKAALIWIVSMLLAIP). Topologically, residues 176–209 (EAVFSDLHPFHVKDTNQTFISCAPYPHSNELHPK) are extracellular. The chain crosses the membrane as a helical span at residues 210–235 (IHSMASFLVFYIIPLSIISVYYYFIA). Residues 236 to 265 (RNLIQSAYNLPVEGNIHVKKQIESRKRLAK) are Cytoplasmic-facing. Residues 266–286 (TVLVFVGLFAFCWLPNHVIYL) traverse the membrane as a helical segment. Over 287–299 (YRSYHYSEVDTSM) the chain is Extracellular. Residues 300-326 (LHFITSICARLLAFTNSCVNPFALYLL) traverse the membrane as a helical segment. The Cytoplasmic segment spans residues 327 to 384 (SKSFRKQFNTQLLCCQPSLLNRSHSTGRSTTCMTSFKSTNPSATFSLINGNICHEGYV). Residue cysteine 340 is the site of S-palmitoyl cysteine attachment. Position 351 is a phosphoserine (serine 351).

It belongs to the G-protein coupled receptor 1 family. Expressed in the hippocampal CA1 region (at protein level).

Its subcellular location is the cell membrane. In terms of biological role, receptor for gastrin-releasing peptide (GRP). Signals via association with G proteins that activate a phosphatidylinositol-calcium second messenger system, resulting in Akt phosphorylation. Contributes to the regulation of food intake. Contributes to the perception of prurient stimuli and transmission of itch signals in the spinal cord that promote scratching behavior, but does not play a role in the perception of pain. Contributes primarily to nonhistaminergic itch sensation. In one study, shown to act in the amygdala as part of an inhibitory network which inhibits memory specifically related to learned fear. In another study, shown to contribute to disinhibition of glutamatergic cells in the auditory cortex via signaling on vasoactive intestinal peptide-expressing cells which leads to enhanced auditory fear memories. Contributes to the induction of sighing through signaling in the pre-Botzinger complex, a cluster of several thousand neurons in the ventrolateral medulla responsible for inspiration during respiratory activity. The chain is Gastrin-releasing peptide receptor (Grpr) from Rattus norvegicus (Rat).